A 275-amino-acid chain; its full sequence is Large ribosomal subunit protein uL2 (275 aa).

The disordered stretch occupies residues 223-275 (VVMNPVDHPHGGGEGKSSGGRHPVSPWGMPTKGYKTRKNKGTDQYIVRRRNKK).

Belongs to the universal ribosomal protein uL2 family. Part of the 50S ribosomal subunit. Forms a bridge to the 30S subunit in the 70S ribosome.

One of the primary rRNA binding proteins. Required for association of the 30S and 50S subunits to form the 70S ribosome, for tRNA binding and peptide bond formation. It has been suggested to have peptidyltransferase activity; this is somewhat controversial. Makes several contacts with the 16S rRNA in the 70S ribosome. This Psychromonas ingrahamii (strain DSM 17664 / CCUG 51855 / 37) protein is Large ribosomal subunit protein uL2.